The primary structure comprises 260 residues: Indole-3-glycerol phosphate synthase (260 aa).

This sequence belongs to the TrpC family.

The catalysed reaction is 1-(2-carboxyphenylamino)-1-deoxy-D-ribulose 5-phosphate + H(+) = (1S,2R)-1-C-(indol-3-yl)glycerol 3-phosphate + CO2 + H2O. Its pathway is amino-acid biosynthesis; L-tryptophan biosynthesis; L-tryptophan from chorismate: step 4/5. The chain is Indole-3-glycerol phosphate synthase from Koribacter versatilis (strain Ellin345).